A 268-amino-acid chain; its full sequence is Chymotrypsin-C (268 aa).

A signal peptide spans 1-16 (MLGITVLAAILACASS). Positions 17–29 (CGDPTFPPNLSAR) are cleaved as a propeptide — activation peptide. Intrachain disulfides connect Cys17-Cys141, Cys59-Cys75, Cys155-Cys222, Cys186-Cys202, and Cys212-Cys243. Asn25 carries N-linked (GlcNAc...) asparagine glycosylation. Residues 30 to 267 (VVGGEDAVPN…YIDWIKEKIQ (238 aa)) enclose the Peptidase S1 domain. His74 (charge relay system) is an active-site residue. Asn79 and Asn90 each carry an N-linked (GlcNAc...) asparagine glycan. The Charge relay system role is filled by Asp121. Asn182 is a glycosylation site (N-linked (GlcNAc...) asparagine). The Charge relay system role is filled by Ser216.

The protein belongs to the peptidase S1 family. Elastase subfamily.

The catalysed reaction is Preferential cleavage: Leu-|-Xaa, Tyr-|-Xaa, Phe-|-Xaa, Met-|-Xaa, Trp-|-Xaa, Gln-|-Xaa, Asn-|-Xaa.. Regulates activation and degradation of trypsinogens and procarboxypeptidases by targeting specific cleavage sites within their zymogen precursors. Has chymotrypsin-type protease activity and hypocalcemic activity. Cleaves TRY4 and TRY5 and thereby inhibits their autoactivation. The polypeptide is Chymotrypsin-C (Ctrc) (Mus musculus (Mouse)).